We begin with the raw amino-acid sequence, 607 residues long: Elongation factor 4 (607 aa).

A tr-type G domain is found at 11–193 (SKIRNFSIIA…QIVEKVPAPT (183 aa)). GTP contacts are provided by residues 23-28 (DHGKST) and 140-143 (NKID).

Belongs to the TRAFAC class translation factor GTPase superfamily. Classic translation factor GTPase family. LepA subfamily.

It localises to the cell membrane. It catalyses the reaction GTP + H2O = GDP + phosphate + H(+). In terms of biological role, required for accurate and efficient protein synthesis under certain stress conditions. May act as a fidelity factor of the translation reaction, by catalyzing a one-codon backward translocation of tRNAs on improperly translocated ribosomes. Back-translocation proceeds from a post-translocation (POST) complex to a pre-translocation (PRE) complex, thus giving elongation factor G a second chance to translocate the tRNAs correctly. Binds to ribosomes in a GTP-dependent manner. This is Elongation factor 4 from Bacillus mycoides (strain KBAB4) (Bacillus weihenstephanensis).